The sequence spans 496 residues: Bifunctional protein HldE (496 aa).

The segment at 1-331 (MDPTPALAEI…AAVHQEEVSA (331 aa)) is ribokinase. 206 to 209 (NRKE) lines the ATP pocket. The active site involves Asp-276. Residues 358-496 (FTNGCFDLLH…GGSRRSGDTL (139 aa)) are cytidylyltransferase.

In the N-terminal section; belongs to the carbohydrate kinase PfkB family. It in the C-terminal section; belongs to the cytidylyltransferase family. In terms of assembly, homodimer.

It catalyses the reaction D-glycero-beta-D-manno-heptose 7-phosphate + ATP = D-glycero-beta-D-manno-heptose 1,7-bisphosphate + ADP + H(+). The enzyme catalyses D-glycero-beta-D-manno-heptose 1-phosphate + ATP + H(+) = ADP-D-glycero-beta-D-manno-heptose + diphosphate. It participates in nucleotide-sugar biosynthesis; ADP-L-glycero-beta-D-manno-heptose biosynthesis; ADP-L-glycero-beta-D-manno-heptose from D-glycero-beta-D-manno-heptose 7-phosphate: step 1/4. Its pathway is nucleotide-sugar biosynthesis; ADP-L-glycero-beta-D-manno-heptose biosynthesis; ADP-L-glycero-beta-D-manno-heptose from D-glycero-beta-D-manno-heptose 7-phosphate: step 3/4. Its function is as follows. Catalyzes the phosphorylation of D-glycero-D-manno-heptose 7-phosphate at the C-1 position to selectively form D-glycero-beta-D-manno-heptose-1,7-bisphosphate. Catalyzes the ADP transfer from ATP to D-glycero-beta-D-manno-heptose 1-phosphate, yielding ADP-D-glycero-beta-D-manno-heptose. This Rhodospirillum rubrum (strain ATCC 11170 / ATH 1.1.1 / DSM 467 / LMG 4362 / NCIMB 8255 / S1) protein is Bifunctional protein HldE.